A 644-amino-acid polypeptide reads, in one-letter code: Threonine--tRNA ligase (644 aa).

Residues 1–62 (MSFSVTLPDG…DSDVEIAIIT (62 aa)) form the TGS domain. The tract at residues 240–538 (DHRTIGRDLD…LTEIYKGAFP (299 aa)) is catalytic. Residues Cys-334, His-385, and His-515 each coordinate Zn(2+).

The protein belongs to the class-II aminoacyl-tRNA synthetase family. As to quaternary structure, homodimer. Zn(2+) serves as cofactor.

The protein localises to the cytoplasm. It catalyses the reaction tRNA(Thr) + L-threonine + ATP = L-threonyl-tRNA(Thr) + AMP + diphosphate + H(+). Catalyzes the attachment of threonine to tRNA(Thr) in a two-step reaction: L-threonine is first activated by ATP to form Thr-AMP and then transferred to the acceptor end of tRNA(Thr). Also edits incorrectly charged L-seryl-tRNA(Thr). The sequence is that of Threonine--tRNA ligase from Lactobacillus acidophilus (strain ATCC 700396 / NCK56 / N2 / NCFM).